The chain runs to 881 residues: Valine--tRNA ligase (881 aa).

The 'HIGH' region signature appears at Pro42 to His52. The short motif at Lys554–Ser558 is the 'KMSKS' region element. An ATP-binding site is contributed by Lys557.

It belongs to the class-I aminoacyl-tRNA synthetase family. ValS type 1 subfamily. As to quaternary structure, monomer.

It is found in the cytoplasm. The enzyme catalyses tRNA(Val) + L-valine + ATP = L-valyl-tRNA(Val) + AMP + diphosphate. In terms of biological role, catalyzes the attachment of valine to tRNA(Val). As ValRS can inadvertently accommodate and process structurally similar amino acids such as threonine, to avoid such errors, it has a 'posttransfer' editing activity that hydrolyzes mischarged Thr-tRNA(Val) in a tRNA-dependent manner. This Wigglesworthia glossinidia brevipalpis protein is Valine--tRNA ligase.